We begin with the raw amino-acid sequence, 366 residues long: Probable methyltransferase-like protein 24 (366 aa).

Positions 1–29 are cleaved as a signal peptide; it reads MARERPPGRGCGVLRRCLLGAVLLFGLRL. The disordered stretch occupies residues 36–110; sequence AGPGSPTRSA…GRPRRKGPRW (75 aa). Pro residues predominate over residues 44-63; the sequence is SAPPGPAWRPPGPHLPPAPG. Positions 91–100 are enriched in low complexity; it reads TPEPGCCAPR.

The protein belongs to the methyltransferase superfamily.

The protein resides in the secreted. Functionally, probable methyltransferase. The protein is Probable methyltransferase-like protein 24 (METTL24) of Homo sapiens (Human).